The primary structure comprises 232 residues: Ribonuclease 3 (232 aa).

Residues 7–136 enclose the RNase III domain; that stretch reads AALLEDTIDY…LLGAVFCDGG (130 aa). Residue glutamate 49 coordinates Mg(2+). Residue aspartate 53 is part of the active site. Residues asparagine 122 and glutamate 125 each coordinate Mg(2+). The active site involves glutamate 125. The 70-residue stretch at 163-232 folds into the DRBM domain; that stretch reads DYKTRLQERL…AKQALEYLEE (70 aa).

The protein belongs to the ribonuclease III family. In terms of assembly, homodimer. Mg(2+) serves as cofactor.

It localises to the cytoplasm. The enzyme catalyses Endonucleolytic cleavage to 5'-phosphomonoester.. Digests double-stranded RNA. Involved in the processing of primary rRNA transcript to yield the immediate precursors to the large and small rRNAs (23S and 16S). Processes some mRNAs, and tRNAs when they are encoded in the rRNA operon. Processes pre-crRNA and tracrRNA of type II CRISPR loci if present in the organism. The polypeptide is Ribonuclease 3 (Syntrophotalea carbinolica (strain DSM 2380 / NBRC 103641 / GraBd1) (Pelobacter carbinolicus)).